The primary structure comprises 545 residues: Glucose-6-phosphate isomerase (545 aa).

The active-site Proton donor is Glu351. Catalysis depends on residues His382 and Lys510.

This sequence belongs to the GPI family.

The protein resides in the cytoplasm. It catalyses the reaction alpha-D-glucose 6-phosphate = beta-D-fructose 6-phosphate. Its pathway is carbohydrate biosynthesis; gluconeogenesis. It participates in carbohydrate degradation; glycolysis; D-glyceraldehyde 3-phosphate and glycerone phosphate from D-glucose: step 2/4. Functionally, catalyzes the reversible isomerization of glucose-6-phosphate to fructose-6-phosphate. The polypeptide is Glucose-6-phosphate isomerase (Shewanella halifaxensis (strain HAW-EB4)).